Here is a 258-residue protein sequence, read N- to C-terminus: Protein IMPACT homolog (258 aa).

The RWD domain maps to 10–114 (EELEAVEAIY…TELDGVLYVE (105 aa)). K187 participates in a covalent cross-link: Glycyl lysine isopeptide (Lys-Gly) (interchain with G-Cter in ubiquitin).

Belongs to the IMPACT family. Interacts (via N-terminus) with GCN1 (via C-terminus); this interaction reduces the GCN1-GCN20 complex formation and prevents the interaction of GCN1 with GCN2 protein kinase and GCN2 activation in amino acid-starved cells. Interacts (via C-terminus) with ACT1; this interaction occurs in a GCN1-independent manner. Interacts with RPL39; this interaction occurs in a GCN1-independent manner. Associates (via middle region) with ribosomes; this association occurs in a GCN1-independent manner and persists under amino acid starvation conditions.

It localises to the cytoplasm. Its subcellular location is the nucleus. Its function is as follows. Translational regulator that ensures constant high levels of translation under amino acid starvation. Plays a role as a negative regulator of the GCN2 kinase activity; impairs GCN1-mediated GCN2 activation, and hence GCN2-mediated eIF-2-alpha phosphorylation in amino acid-starved cells and subsequent down-regulation of protein synthesis. In normal conditions, it resides in a actin complex and has no activity. The protein is Protein IMPACT homolog (YIH1) of Saccharomyces cerevisiae (strain ATCC 204508 / S288c) (Baker's yeast).